The primary structure comprises 1447 residues: MWPSQLLIFMMLLAPIIHAFSRAPIPMAVVRRELSCESYPIELRCPGTDVIMIESANYGRTDDKICDSDPAQMENIRCYLPDAYKIMSQRCNNRTQCAVVAGPDVFPDPCPGTYKYLEVQYECVPYKVEQKVFLCPGLLKGVYQSEHLFESDHQSGAWCKDPLQASDKIYYMPWTPYRTDTLTEYSSKDDFIAGRPTTTYKLPHRVDGTGFVVYDGALFFNKERTRNIVKFDLRTRIKSGEAIIANANYHDTSPYRWGGKSDIDLAVDENGLWVIYATEQNNGKIVISQLNPYTLRIEGTWDTAYDKRSASNAFMICGILYVVKSVYEDDDNEATGNKIDYIYNTDQSKDSLVDVPFPNSYQYIAAVDYNPRDNLLYVWNNYHVVKYSLDFGPLDSRSGQAHHGQVSYISPPIHLDSELERPSVKDISTTGPLGMGSTTTSTTLRTTTLSPGRSTTPSVSGRRNRSTSTPSPAVEVLDDMTTHLPSASSQIPALEESCEAVEAREIMWFKTRQGQIAKQPCPAGTIGVSTYLCLAPDGIWDPQGPDLSNCSSPWVNHITQKLKSGETAANIARELAEQTRNHLNAGDITYSVRAMDQLVGLLDVQLRNLTPGGKDSAARSLNKAMVETVNNLLQPQALNAWRDLTTSDQLRAATMLLHTVEESAFVLADNLLKTDIVRENTDNIKLEVARLSTEGNLEDLKFPENMGHGSTIQLSANTLKQNGRNGEIRVAFVLYNNLGPYLSTENASMKLGTEALSTNHSVIVNSPVITAAINKEFSNKVYLADPVVFTVKHIKQSEENFNPNCSFWSYSKRTMTGYWSTQGCRLLTTNKTHTTCSCNHLTNFAVLMAHVEVKHSDAVHDLLLDVITWVGILLSLVCLLICIFTFCFFRGLQSDRNTIHKNLCISLFVAELLFLIGINRTDQPIACAVFAALLHFFFLAAFTWMFLEGVQLYIMLVEVFESEHSRRKYFYLVGYGMPALIVAVSAAVDYRSYGTDKVCWLRLDTYFIWSFIGPATLIIMLNVIFLGIALYKMFHHTAILKPESGCLDNIKSWVIGAIALLCLLGLTWAFGLMYINESTVIMAYLFTIFNSLQGMFIFIFHCVLQKKVRKEYGKCLRTHCCSGKSTESSIGSGKTSGSRTPGRYSTGSQSRIRRMWNDTVRKQSESSFITGDINSSASLNREGLLNNARDTSVMDTLPLNGNHGNSYSIASGEYLSNCVQIIDRGYNHNETALEKKILKELTSNYIPSYLNNHERSSEQNRNLMNKLVNNLGSGREDDAIVLDDATSFNHEESLGLELIHEESDAPLLPPRVYSTENHQPHHYTRRRIPQDHSESFFPLLTNEHTEDLQSPHRDSLYTSMPTLAGVAATESVTTSTQTEPPPAKCGDAEDVYYKSMPNLGSRNHVHQLHTYYQLGRGSSDGFIVPPNKDGTPPEGSSKGPAHLVTSL.

The signal sequence occupies residues 1-19 (MWPSQLLIFMMLLAPIIHA). The Extracellular portion of the chain corresponds to 20–862 (FSRAPIPMAV…VKHSDAVHDL (843 aa)). The SUEL-type lectin domain occupies 35–124 (SCESYPIELR…KYLEVQYECV (90 aa)). Intrachain disulfides connect Cys36–Cys66, Cys45–Cys123, Cys78–Cys110, Cys91–Cys97, and Cys135–Cys317. Residue Asn93 is glycosylated (N-linked (GlcNAc...) asparagine). The region spanning 134 to 393 (LCPGLLKGVY…VVKYSLDFGP (260 aa)) is the Olfactomedin-like domain. The segment at 249 to 279 (YHDTSPYRWGGKSDIDLAVDENGLWVIYATE) is interaction with FLRT3. Residues Asp264, Asn312, Ala313, and Val367 each coordinate Ca(2+). The disordered stretch occupies residues 426 to 473 (DISTTGPLGMGSTTTSTTLRTTTLSPGRSTTPSVSGRRNRSTSTPSPA). Residues 428 to 458 (STTGPLGMGSTTTSTTLRTTTLSPGRSTTPS) are compositionally biased toward low complexity. N-linked (GlcNAc...) asparagine glycosylation is found at Asn464, Asn549, Asn746, Asn759, Asn804, and Asn830. The GAIN-B domain occupies 675-854 (DIVRENTDNI…AVLMAHVEVK (180 aa)). Intrachain disulfides connect Cys805-Cys836 and Cys824-Cys838. Positions 805–854 (CSFWSYSKRTMTGYWSTQGCRLLTTNKTHTTCSCNHLTNFAVLMAHVEVK) are GPS. The stachel stretch occupies residues 842 to 855 (TNFAVLMAHVEVKH). The chain crosses the membrane as a helical span at residues 863 to 888 (LLDVITWVGILLSLVCLLICIFTFCF). The Cytoplasmic portion of the chain corresponds to 889-896 (FRGLQSDR). The chain crosses the membrane as a helical span at residues 897 to 918 (NTIHKNLCISLFVAELLFLIGI). Residues 919-926 (NRTDQPIA) lie on the Extracellular side of the membrane. A helical transmembrane segment spans residues 927–950 (CAVFAALLHFFFLAAFTWMFLEGV). Cys927 and Cys999 form a disulfide bridge. Over 951 to 967 (QLYIMLVEVFESEHSRR) the chain is Cytoplasmic. The chain crosses the membrane as a helical span at residues 968 to 990 (KYFYLVGYGMPALIVAVSAAVDY). Residues 991–1005 (RSYGTDKVCWLRLDT) lie on the Extracellular side of the membrane. A helical transmembrane segment spans residues 1006 to 1027 (YFIWSFIGPATLIIMLNVIFLG). Over 1028-1053 (IALYKMFHHTAILKPESGCLDNIKSW) the chain is Cytoplasmic. A helical membrane pass occupies residues 1054-1073 (VIGAIALLCLLGLTWAFGLM). Residues 1074 to 1078 (YINES) are Extracellular-facing. N-linked (GlcNAc...) asparagine glycosylation occurs at Asn1076. Residues 1079–1104 (TVIMAYLFTIFNSLQGMFIFIFHCVL) traverse the membrane as a helical segment. Residues 1105–1447 (QKKVRKEYGK…KGPAHLVTSL (343 aa)) are Cytoplasmic-facing. The interval 1123-1147 (GKSTESSIGSGKTSGSRTPGRYSTG) is disordered. Residue Ser1164 is modified to Phosphoserine. Positions 1423–1447 (IVPPNKDGTPPEGSSKGPAHLVTSL) are disordered. The PDZ-binding signature appears at 1442-1447 (HLVTSL).

This sequence belongs to the G-protein coupled receptor 2 family. LN-TM7 subfamily. Heterodimer of 2 chains generated by proteolytic processing; the large extracellular N-terminal fragment and the membrane-bound C-terminal fragment predominantly remain associated and non-covalently linked. Interacts (via olfactomedin-like domain) with FLRT1 (via extracellular domain). Interacts (via olfactomedin-like domain) with FLRT2 (via extracellular domain). Interacts (via olfactomedin-like domain) with FLRT3 (via extracellular domain); the interaction is direct. Interacts (via extracellular domain) with TENM1. Interacts (via extracellular domain) with TENM2. Interacts (via extracellular domain) with TENM3. Identified in a complex with FLRT3 and UNC5B; does not interact with UNC5B by itself. Identified in a complex with FLRT3 and UNC5D; does not interact with UNC5D by itself. In terms of assembly, interacts (via PDZ-binding motif) with SHANK3. Interacts (via PDZ-binding motif) with DLG4. In terms of processing, autoproteolytically processed at the GPS region of the GAIN-B domain; this cleavage modulates receptor activity.

It is found in the cell membrane. It localises to the postsynaptic cell membrane. The protein resides in the cell projection. Its subcellular location is the axon. The protein localises to the cell junction. With respect to regulation, forms a heterodimer of 2 chains generated by proteolytic processing that remain associated through non-covalent interactions mediated by the GAIN-B domain. In the inactivated receptor, the Stachel sequence (also named stalk) is embedded in the GAIN-B domain, where it adopts a beta-strand conformation. On activation, the Stachel moves into the 7 transmembrane region and adopts a twisted hook-shaped configuration that forms contacts within the receptor, leading to coupling of a G-alpha protein, which activates signaling. The cleaved GAIN-B and N-terminal domains can then dissociate from the rest of the receptor. Functionally, orphan adhesion G-protein coupled receptor (aGPCR), which mediates synapse specificity. Ligand binding causes a conformation change that triggers signaling via guanine nucleotide-binding proteins (G proteins) and modulates the activity of downstream effectors. ADGRL3 is coupled with different classes of G alpha proteins, such as G(12)/G(13), G(s), G(i) or G(q), depending on the context. Coupling to G(12)/G(13) G proteins, which mediates the activation Rho small GTPases is the most efficient. Following G-protein coupled receptor activation, associates with cell adhesion molecules that are expressed at the surface of adjacent cells to direct synapse specificity. Specifically mediates the establishment of Schaffer-collateral synapses formed by CA3-region axons on CA1-region pyramidal neurons in the hippocampus. Localizes to postsynaptic spines in excitatory synapses in the S.oriens and S.radiatum and interacts with presynaptic cell adhesion molecules FLRT3 and TENM2, promoting synapse formation. Plays a role in the development of glutamatergic synapses in the cortex. Important in determining the connectivity rates between the principal neurons in the cortex. Its function is as follows. Orphan adhesion G-protein coupled receptor (aGPCR), which mediates synapse specificity. Ligand binding causes a conformation change that triggers signaling via guanine nucleotide-binding proteins (G proteins) and modulates the activity of downstream effectors, such as adenylate cyclase. Isoform 1 is specifically coupled to G(s) G proteins and mediates activation of adenylate cyclase activity. Following G-protein coupled receptor activation, undergoes liquid-liquid phase transition, associates with (1) cell adhesion molecules that are expressed at the surface of adjacent cells, as well as (2) PDZ-containing proteins, such as SHANK3 and DLG4, in the cytoplasm to direct synapse formation. In Homo sapiens (Human), this protein is Adhesion G protein-coupled receptor L3.